The sequence spans 302 residues: Aspartate carbamoyltransferase catalytic subunit (302 aa).

Residues Arg-51 and Thr-52 each contribute to the carbamoyl phosphate site. L-aspartate is bound at residue Lys-80. Residues Arg-101, His-129, and Gln-132 each contribute to the carbamoyl phosphate site. Arg-162 and Arg-223 together coordinate L-aspartate. Carbamoyl phosphate-binding residues include Leu-261 and Pro-262.

Belongs to the aspartate/ornithine carbamoyltransferase superfamily. ATCase family. In terms of assembly, heterododecamer (2C3:3R2) of six catalytic PyrB chains organized as two trimers (C3), and six regulatory PyrI chains organized as three dimers (R2).

The enzyme catalyses carbamoyl phosphate + L-aspartate = N-carbamoyl-L-aspartate + phosphate + H(+). The protein operates within pyrimidine metabolism; UMP biosynthesis via de novo pathway; (S)-dihydroorotate from bicarbonate: step 2/3. Catalyzes the condensation of carbamoyl phosphate and aspartate to form carbamoyl aspartate and inorganic phosphate, the committed step in the de novo pyrimidine nucleotide biosynthesis pathway. The chain is Aspartate carbamoyltransferase catalytic subunit from Chromobacterium violaceum (strain ATCC 12472 / DSM 30191 / JCM 1249 / CCUG 213 / NBRC 12614 / NCIMB 9131 / NCTC 9757 / MK).